The following is a 221-amino-acid chain: UPF0758 protein YicR (221 aa).

The 123-residue stretch at 99 to 221 (ALLSPEMTLE…YVSFAERGWI (123 aa)) folds into the MPN domain. Residues H170, H172, and D183 each coordinate Zn(2+). The short motif at 170-183 (HNHPSGCAEPSKAD) is the JAMM motif element.

It belongs to the UPF0758 family. YicR subfamily.

The polypeptide is UPF0758 protein YicR (Salmonella arizonae (strain ATCC BAA-731 / CDC346-86 / RSK2980)).